The primary structure comprises 442 residues: D-serine dehydratase (442 aa).

An N6-(pyridoxal phosphate)lysine modification is found at Lys-118.

It belongs to the serine/threonine dehydratase family. DsdA subfamily. Monomer. It depends on pyridoxal 5'-phosphate as a cofactor.

It carries out the reaction D-serine = pyruvate + NH4(+). This Escherichia coli O6:H1 (strain CFT073 / ATCC 700928 / UPEC) protein is D-serine dehydratase.